The primary structure comprises 225 residues: Phosphoribosylformylglycinamidine synthase subunit PurQ (225 aa).

In terms of domain architecture, Glutamine amidotransferase type-1 spans 5 to 225; it reads RFGIVVFPGS…WQSIVQSLAG (221 aa). Catalysis depends on cysteine 89, which acts as the Nucleophile. Active-site residues include histidine 198 and glutamate 200.

Part of the FGAM synthase complex composed of 1 PurL, 1 PurQ and 2 PurS subunits.

Its subcellular location is the cytoplasm. It catalyses the reaction N(2)-formyl-N(1)-(5-phospho-beta-D-ribosyl)glycinamide + L-glutamine + ATP + H2O = 2-formamido-N(1)-(5-O-phospho-beta-D-ribosyl)acetamidine + L-glutamate + ADP + phosphate + H(+). The enzyme catalyses L-glutamine + H2O = L-glutamate + NH4(+). It functions in the pathway purine metabolism; IMP biosynthesis via de novo pathway; 5-amino-1-(5-phospho-D-ribosyl)imidazole from N(2)-formyl-N(1)-(5-phospho-D-ribosyl)glycinamide: step 1/2. Its function is as follows. Part of the phosphoribosylformylglycinamidine synthase complex involved in the purines biosynthetic pathway. Catalyzes the ATP-dependent conversion of formylglycinamide ribonucleotide (FGAR) and glutamine to yield formylglycinamidine ribonucleotide (FGAM) and glutamate. The FGAM synthase complex is composed of three subunits. PurQ produces an ammonia molecule by converting glutamine to glutamate. PurL transfers the ammonia molecule to FGAR to form FGAM in an ATP-dependent manner. PurS interacts with PurQ and PurL and is thought to assist in the transfer of the ammonia molecule from PurQ to PurL. The protein is Phosphoribosylformylglycinamidine synthase subunit PurQ of Synechococcus sp. (strain JA-3-3Ab) (Cyanobacteria bacterium Yellowstone A-Prime).